The primary structure comprises 179 residues: Peptide deformylase (179 aa).

Positions 102 and 144 each coordinate Fe cation. Residue E145 is part of the active site. H148 serves as a coordination point for Fe cation.

This sequence belongs to the polypeptide deformylase family. Requires Fe(2+) as cofactor.

The catalysed reaction is N-terminal N-formyl-L-methionyl-[peptide] + H2O = N-terminal L-methionyl-[peptide] + formate. Removes the formyl group from the N-terminal Met of newly synthesized proteins. Requires at least a dipeptide for an efficient rate of reaction. N-terminal L-methionine is a prerequisite for activity but the enzyme has broad specificity at other positions. The protein is Peptide deformylase of Wolbachia pipientis wMel.